The sequence spans 364 residues: GTPase Obg (364 aa).

Positions 1–159 constitute an Obg domain; it reads MKFLDEAKVY…KTIWLHLKLI (159 aa). The region spanning 160 to 327 is the OBG-type G domain; sequence ADAGLVGLPN…VLRALRDIIV (168 aa). GTP-binding positions include 166–173, 191–195, 212–215, 279–282, and 308–310; these read GLPNAGKS, FTTLH, DIPG, SQID, and SAV. Mg(2+) is bound by residues Ser-173 and Thr-193. The segment at 333–364 is disordered; it reads EKPAKVPKLRHRDMVVTDEGEDKGGDEGDDQP.

This sequence belongs to the TRAFAC class OBG-HflX-like GTPase superfamily. OBG GTPase family. As to quaternary structure, monomer. It depends on Mg(2+) as a cofactor.

The protein localises to the cytoplasm. In terms of biological role, an essential GTPase which binds GTP, GDP and possibly (p)ppGpp with moderate affinity, with high nucleotide exchange rates and a fairly low GTP hydrolysis rate. Plays a role in control of the cell cycle, stress response, ribosome biogenesis and in those bacteria that undergo differentiation, in morphogenesis control. This is GTPase Obg from Rhizobium johnstonii (strain DSM 114642 / LMG 32736 / 3841) (Rhizobium leguminosarum bv. viciae).